The primary structure comprises 392 residues: Heavy metal-associated isoprenylated plant protein 6 (392 aa).

Residues 1-19 (MGEKKEETATKPQGEKKPT) are compositionally biased toward basic and acidic residues. Positions 1–22 (MGEKKEETATKPQGEKKPTDGG) are disordered. The HMA 1 domain maps to 23–86 (ITTVVMKLDM…KVADKIKRPV (64 aa)). The Cd(2+) site is built by Cys-34 and Cys-37. Residues 89-157 (VSTVAPPKKE…PPPPKESTVV (69 aa)) form a disordered region. Positions 106–145 (AEKKPSPAAEEKPAEKKPAAVEKPGEKKEEKKKEEGEKKA) are enriched in basic and acidic residues. The region spanning 153-216 (ESTVVLKTKL…YLNEKLKRTV (64 aa)) is the HMA 2 domain. The Cd(2+) site is built by Cys-164 and Cys-167. The segment covering 258–270 (KKVDGGGEKKKEV) has biased composition (basic and acidic residues). Disordered stretches follow at residues 258 to 285 (KKVD…GGDG) and 350 to 392 (GQGY…CSVM). Positions 272–285 (VGGGGGGGGGGGDG) are enriched in gly residues. Position 389 is a cysteine methyl ester (Cys-389). The S-farnesyl cysteine moiety is linked to residue Cys-389. Residues 390 to 392 (SVM) constitute a propeptide, removed in mature form.

It belongs to the HIPP family. Expressed in petioles, hypocotyls, peduncles, vascular bundles and root meristems.

It is found in the cell membrane. Heavy-metal-binding protein. Involved in the maintenance of heavy metal homeostasis and/or in detoxification. This Arabidopsis thaliana (Mouse-ear cress) protein is Heavy metal-associated isoprenylated plant protein 6.